The sequence spans 465 residues: Iron-sulfur cluster assembly SufBD family protein SAUSA300_0822 (465 aa).

Belongs to the iron-sulfur cluster assembly SufBD family.

The polypeptide is Iron-sulfur cluster assembly SufBD family protein SAUSA300_0822 (Staphylococcus aureus (strain USA300)).